Consider the following 294-residue polypeptide: MEFSEWTKNKRKLNNLEELKRDIIEQFKEKNALDEGIVVMASGGKDSSTAIALAKDLGLNIEYLIHFYHRWSWDVSKKMVEKLSKKFDIPVIFYNITDELLKRTKGAKGSSICRICKNIMKDKAVDISKEKGIRIIMTGDSALEKVSGAVMNYLRDVYGEVVYNKMELTPVPQKYSKGKDKEVLFFRPLIRLACEDVLKLMDYYNIEIERAHEVGDKIGFWREGCCLQYADENALLNEKLFNELYKYNKIATEVAKKHGFRASIKLPSKKIMVVPKKDEYITLIKNALRDVDES.

This is an uncharacterized protein from Methanocaldococcus jannaschii (strain ATCC 43067 / DSM 2661 / JAL-1 / JCM 10045 / NBRC 100440) (Methanococcus jannaschii).